We begin with the raw amino-acid sequence, 271 residues long: MVNLKELSQNEVLELINYVKSLRKQNFSYSQISKKIEIERNIKISKSTIIRWCKNSNNPFNKTKFIDLSPSPELSYIIGVYFGDANIYYRKKTGSYYFRIKVVDKDFVDVVKNSLIKIGLNPTISYVEEKTRSNRWHVEASSKSLYKFLSQNKEELFKVAEKYPEDFLRGFFDSEGYVTSNKIALENYDLELLEFSKELLKKLDVHSTIHIAKKKGTESNIRGEIYHYKDDFYRLSIHRKESVRNFAIKVSFSIKRKRERLQKLLESMDKH.

The region spanning I77–V205 is the DOD-type homing endonuclease domain.

This is an uncharacterized protein from Methanocaldococcus jannaschii (strain ATCC 43067 / DSM 2661 / JAL-1 / JCM 10045 / NBRC 100440) (Methanococcus jannaschii).